Consider the following 322-residue polypeptide: MKIDVIPLGTASAVPTDERHLSALAVERKGQVLLFDCGEGTQYRLREAGLSWARIEAIFVTHLHGDHCYGLPGLLSTMELQQRADPVTLVLPPGGPAMLRAVPGATPARLSFPVHVVEADAAGTLGTVYETDEIAVEARRLDHREVFAMGFRVAERTRPGRFDPERARALGVPEGPAFGRLQNGCPVTTPDGTTVRPGQVLGPPRPGVVAAYVTDTRPCAGGRALAEEADLLYHDATFADDHAARADETGHSTARQAATVAREAGATRLLLGHLSARYPDPAPQEREARSVFPAAEVAEELRRYELDPREKEPDPVGPADES.

Positions 62, 64, 66, 67, 143, 215, and 273 each coordinate Zn(2+). D66 (proton acceptor) is an active-site residue. Basic and acidic residues predominate over residues 300 to 314; sequence ELRRYELDPREKEPD. The tract at residues 300-322 is disordered; sequence ELRRYELDPREKEPDPVGPADES.

The protein belongs to the RNase Z family. As to quaternary structure, homodimer. The cofactor is Zn(2+).

It catalyses the reaction Endonucleolytic cleavage of RNA, removing extra 3' nucleotides from tRNA precursor, generating 3' termini of tRNAs. A 3'-hydroxy group is left at the tRNA terminus and a 5'-phosphoryl group is left at the trailer molecule.. Zinc phosphodiesterase, which displays some tRNA 3'-processing endonuclease activity. Probably involved in tRNA maturation, by removing a 3'-trailer from precursor tRNA. The polypeptide is Ribonuclease Z (Salinibacter ruber (strain DSM 13855 / M31)).